A 331-amino-acid polypeptide reads, in one-letter code: tRNA-modifying protein YgfZ (331 aa).

Folate is bound by residues tryptophan 28 and tryptophan 191.

Belongs to the tRNA-modifying YgfZ family.

It is found in the cytoplasm. Its function is as follows. Folate-binding protein involved in regulating the level of ATP-DnaA and in the modification of some tRNAs. It is probably a key factor in regulatory networks that act via tRNA modification, such as initiation of chromosomal replication. The sequence is that of tRNA-modifying protein YgfZ from Edwardsiella ictaluri (strain 93-146).